The following is a 269-amino-acid chain: Small ribosomal subunit protein uS2 (269 aa).

A disordered region spans residues 224 to 269 (ANQGREDSEDVYSETENDTEETDEELVSEEDLKEFVENSEEESDEE). A compositionally biased stretch (acidic residues) spans 230–269 (DSEDVYSETENDTEETDEELVSEEDLKEFVENSEEESDEE).

This sequence belongs to the universal ribosomal protein uS2 family.

The sequence is that of Small ribosomal subunit protein uS2 from Finegoldia magna (strain ATCC 29328 / DSM 20472 / WAL 2508) (Peptostreptococcus magnus).